Reading from the N-terminus, the 218-residue chain is Transmembrane gamma-carboxyglutamic acid protein 1 (218 aa).

Residues 1–20 (MGRVFLTGEKANSVLKRYPR) constitute a propeptide that is removed on maturation. The Gla domain maps to 20 to 66 (RANGFFEEIRQGNIERECKEEFCTFEEAREAFENNEKTKEFWSTYTK). The Extracellular portion of the chain corresponds to 21-80 (ANGFFEEIRQGNIERECKEEFCTFEEAREAFENNEKTKEFWSTYTKAQQGESNRGSDWFQ). Residues C37 and C42 are joined by a disulfide bond. Residues 81-101 (FYLTFPLIFGLFIILLVIFLI) traverse the membrane as a helical segment. The Cytoplasmic segment spans residues 102 to 218 (WRCFLRNKTR…PMVPVVTTIK (117 aa)). The segment at 161 to 195 (TRLSNCDPPPTYEEATGQVNLQRSETEPHLDPPPE) is disordered.

In terms of processing, gla residues are produced after subsequent post-translational modifications of glutamate by a vitamin K-dependent gamma-carboxylase.

The protein resides in the membrane. The polypeptide is Transmembrane gamma-carboxyglutamic acid protein 1 (PRRG1) (Pongo abelii (Sumatran orangutan)).